Here is a 173-residue protein sequence, read N- to C-terminus: MDYFTLFGLPARYALDRELLATRYQELQRQFHPDRFANQPEREKTLALQQATTINTGYQTLKHPLKRAEYMLSQQGFDLSNEQHTMQDTAFLMQQLELREELDAIEHSSDTEAVLSGFSSRLNKMIKTRREQMEQQLDAAEWLIAADTVRKLRFLDKLQQQVEQLEERLLGDF.

Residues 2–74 enclose the J domain; sequence DYFTLFGLPA…LKRAEYMLSQ (73 aa).

This sequence belongs to the HscB family. Interacts with HscA and stimulates its ATPase activity. Interacts with IscU.

Its function is as follows. Co-chaperone involved in the maturation of iron-sulfur cluster-containing proteins. Seems to help targeting proteins to be folded toward HscA. This chain is Co-chaperone protein HscB, found in Xenorhabdus nematophila (strain ATCC 19061 / DSM 3370 / CCUG 14189 / LMG 1036 / NCIMB 9965 / AN6).